Reading from the N-terminus, the 395-residue chain is Phosphatidylinositol 4-phosphate 5-kinase-like protein 1 (395 aa).

A disordered region spans residues methionine 1–serine 25. In terms of domain architecture, PIPK spans alanine 37–threonine 394.

In terms of assembly, interacts with type I phosphatidylinositol 4-phosphate 5-kinases, including PIP5K1A and PIP5K1B. As to expression, highly expressed in brain and testis, relatively to heart, spleen, lung, liver, skeletal muscle and kidney.

Its subcellular location is the cytoplasm. The protein resides in the membrane. May act as a scaffold to localize and regulate type I phosphatidylinositol 4-phosphate 5-kinases to specific compartments within the cell, where they generate PI(4,5)P2 for actin nucleation, signaling and scaffold protein recruitment and conversion to PI(3,4,5)P3. This chain is Phosphatidylinositol 4-phosphate 5-kinase-like protein 1 (Pip5kl1), found in Mus musculus (Mouse).